Here is a 329-residue protein sequence, read N- to C-terminus: uncharacterized protein (329 aa).

To type I restriction system adenine methylases.

This is an uncharacterized protein from Bacillus subtilis (strain 168).